The primary structure comprises 170 residues: Putative pre-16S rRNA nuclease (170 aa).

The protein belongs to the YqgF nuclease family.

It is found in the cytoplasm. In terms of biological role, could be a nuclease involved in processing of the 5'-end of pre-16S rRNA. The sequence is that of Putative pre-16S rRNA nuclease from Synechococcus sp. (strain JA-2-3B'a(2-13)) (Cyanobacteria bacterium Yellowstone B-Prime).